The sequence spans 407 residues: MDGLPGRALGAACLLLLAAGWLGPEAWGSPTPPPTPAAPPPPPPPGSPGGSQDTCTSCGGFRRPEELGRVDGDFLEAVKRHILSRLQMRGRPNITHAVPKAAMVTALRKLHAGKVREDGRVEIPHLDGHASPGADGQERVSEIISFAETDGLASSRVRLYFFISNEGNQNLFVVQASLWLYLKLLPYVLEKGSRRKVRVKVYFQEQGHGDRWNMVEKRVDLKRSGWHTFPLTEAIQALFERGERRLNLDVQCDSCQELAVVPVFVDPGEESHRPFVVVQARLGDSRHRIRKRGLECDGRTNLCCRQQFFIDFRLIGWNDWIIAPTGYYGNYCEGSCPAYLAGVPGSASSFHTAVVNQYRMRGLNPGTVNSCCIPTKLSTMSMLYFDDEYNIVKRDVPNMIVEECGCA.

A signal peptide spans 1 to 28 (MDGLPGRALGAACLLLLAAGWLGPEAWG). Residues 26–62 (AWGSPTPPPTPAAPPPPPPPGSPGGSQDTCTSCGGFR) form a disordered region. A propeptide spanning residues 29–292 (SPTPPPTPAA…GDSRHRIRKR (264 aa)) is cleaved from the precursor. Residues 30 to 47 (PTPPPTPAAPPPPPPPGS) are compositionally biased toward pro residues. N93 carries N-linked (GlcNAc...) asparagine glycosylation. 4 disulfide bridges follow: C296–C304, C303–C372, C332–C404, and C336–C406.

This sequence belongs to the TGF-beta family. In terms of assembly, dimeric, linked by one or more disulfide bonds. Inhibin B is a dimer of alpha and beta-B. Activin B is a homodimer of beta-B. Activin AB is a dimer of beta-A and beta-B. Interacts with FST and FSTL3. Activin B interacts with BMPR2.

The protein resides in the secreted. In terms of biological role, inhibins and activins inhibit and activate, respectively, the secretion of follitropin by the pituitary gland. Inhibins/activins are involved in regulating a number of diverse functions such as hypothalamic and pituitary hormone secretion, gonadal hormone secretion, germ cell development and maturation, erythroid differentiation, insulin secretion, nerve cell survival, embryonic axial development or bone growth, depending on their subunit composition. Inhibins appear to oppose the functions of activins. Its function is as follows. Activin B is a dimer of alpha and beta-B that plays a role in several essential biological processes including embryonic development, stem cell maintenance and differentiation, haematopoiesis, cell proliferation and wound healing. Signals through type I receptor ACVR1C, abundantly expressed in pancreatic beta cells, and type II receptors like ACVR2A or BMPR2. Upon ligand binding, these receptors phosphorylate intracellular signaling mediators SMAD2 and SMAD3, which form a complex with SMAD4, translocate to the nucleus, and regulate gene expression. Plays a crucial role in the induction of hepcidin by inflammation through activation of ACVR1C and subsequent phosphorylation of SMAD1/5/8. Regulates adipocyte lipid metabolism by decreasing non-esterified fatty acids and glycerol release and increases intracellular triglyceride content. Stimulates wound healing by promoting cell migration and hair follicle regeneration through the JNK and ERK signaling pathways downstream of RHOA. Inhibin B is a dimer of alpha and beta-B that plays a crucial role in the regulation of the reproductive system by inhibiting the secretion of follicle-stimulating hormone (FSH) from the anterior pituitary gland. Thereby, maintains reproductive homeostasis in both males and females. Acts as a more potent suppressor of FSH release than inhibin A. Functions as competitive receptor antagonist binding activin type II receptors with high affinity in the presence of the TGF-beta type III coreceptor/TGFBR3L. This chain is Inhibin beta B chain (INHBB), found in Homo sapiens (Human).